Consider the following 72-residue polypeptide: Translation initiation factor IF-1 (72 aa).

One can recognise an S1-like domain in the interval Met-1–Arg-72.

This sequence belongs to the IF-1 family. In terms of assembly, component of the 30S ribosomal translation pre-initiation complex which assembles on the 30S ribosome in the order IF-2 and IF-3, IF-1 and N-formylmethionyl-tRNA(fMet); mRNA recruitment can occur at any time during PIC assembly.

The protein resides in the cytoplasm. Functionally, one of the essential components for the initiation of protein synthesis. Stabilizes the binding of IF-2 and IF-3 on the 30S subunit to which N-formylmethionyl-tRNA(fMet) subsequently binds. Helps modulate mRNA selection, yielding the 30S pre-initiation complex (PIC). Upon addition of the 50S ribosomal subunit IF-1, IF-2 and IF-3 are released leaving the mature 70S translation initiation complex. The protein is Translation initiation factor IF-1 of Treponema denticola (strain ATCC 35405 / DSM 14222 / CIP 103919 / JCM 8153 / KCTC 15104).